A 475-amino-acid polypeptide reads, in one-letter code: Argininosuccinate lyase (475 aa).

Belongs to the lyase 1 family. Argininosuccinate lyase subfamily.

It localises to the cytoplasm. The enzyme catalyses 2-(N(omega)-L-arginino)succinate = fumarate + L-arginine. It participates in amino-acid biosynthesis; L-arginine biosynthesis; L-arginine from L-ornithine and carbamoyl phosphate: step 3/3. The chain is Argininosuccinate lyase from Leifsonia xyli subsp. xyli (strain CTCB07).